A 237-amino-acid chain; its full sequence is Ribosomal RNA small subunit methyltransferase G (237 aa).

S-adenosyl-L-methionine contacts are provided by residues glycine 78, phenylalanine 83, 129–130 (AE), and arginine 148.

Belongs to the methyltransferase superfamily. RNA methyltransferase RsmG family.

It is found in the cytoplasm. Its function is as follows. Specifically methylates the N7 position of a guanine in 16S rRNA. This chain is Ribosomal RNA small subunit methyltransferase G, found in Streptococcus pyogenes serotype M2 (strain MGAS10270).